The following is a 134-amino-acid chain: Aspartate 1-decarboxylase (134 aa).

S25 (schiff-base intermediate with substrate; via pyruvic acid) is an active-site residue. The residue at position 25 (S25) is a Pyruvic acid (Ser). Position 57 (T57) interacts with substrate. The Proton donor role is filled by Y58. Substrate is bound at residue G73–A75.

The protein belongs to the PanD family. Heterooctamer of four alpha and four beta subunits. Pyruvate serves as cofactor. Post-translationally, is synthesized initially as an inactive proenzyme, which is activated by self-cleavage at a specific serine bond to produce a beta-subunit with a hydroxyl group at its C-terminus and an alpha-subunit with a pyruvoyl group at its N-terminus.

The protein localises to the cytoplasm. The enzyme catalyses L-aspartate + H(+) = beta-alanine + CO2. It functions in the pathway cofactor biosynthesis; (R)-pantothenate biosynthesis; beta-alanine from L-aspartate: step 1/1. Functionally, catalyzes the pyruvoyl-dependent decarboxylation of aspartate to produce beta-alanine. This is Aspartate 1-decarboxylase from Sulfurihydrogenibium sp. (strain YO3AOP1).